We begin with the raw amino-acid sequence, 158 residues long: MSKKTTPSSAPLDNTPYDVTEQVGHLLRKAYQRHTAIFQQQACDPQLTSIQFVTLCALRDHGPSSQAELIKATAVDQATIRGIVERLKARELVQLSPDPGDRRKVIVELTESGAALLDAMIPCARQISELSMGSLNAGERVAILYLLRKMIDSDENAG.

In terms of domain architecture, HTH marR-type spans 20 to 152 (TEQVGHLLRK…ILYLLRKMID (133 aa)). A DNA-binding region (H-T-H motif) is located at residues 66-89 (QAELIKATAVDQATIRGIVERLKA).

The protein operates within cofactor degradation; nicotinate degradation [regulation]. In terms of biological role, transcriptional repressor for the nicCDEFTP and nicXR operons, encoding the lower aerobic nicotinate degradation pathway. Acts under non-induced conditions: repression of the nicCDEFTP and nicXR operons becomes alleviated in presence of 6-hydroxynicotinate (6HNA). In Pseudomonas putida (strain ATCC 47054 / DSM 6125 / CFBP 8728 / NCIMB 11950 / KT2440), this protein is HTH-type transcriptional repressor NicR (nicR).